The chain runs to 640 residues: Fructose-1,6-bisphosphatase class 3 (640 aa).

The protein belongs to the FBPase class 3 family. It depends on Mn(2+) as a cofactor.

The enzyme catalyses beta-D-fructose 1,6-bisphosphate + H2O = beta-D-fructose 6-phosphate + phosphate. It functions in the pathway carbohydrate biosynthesis; gluconeogenesis. The sequence is that of Fructose-1,6-bisphosphatase class 3 from Lactococcus lactis subsp. cremoris (strain MG1363).